We begin with the raw amino-acid sequence, 256 residues long: Putative F-box protein At3g51171 (256 aa).

Residues Met1–His44 enclose the F-box domain.

In Arabidopsis thaliana (Mouse-ear cress), this protein is Putative F-box protein At3g51171.